The sequence spans 162 residues: GKDINNNMEKAACATSSLVTQDDLQYHSLSKQQNESPQPLVGTGKKSPESLVKPDATPLSSPRHVRIKNWGSGMTFQDTLHHKAKGILTCRSKSCLGSIMTPKSLTRGPRDKPTPPDELLPQAIEFVNLSLEISVQDQIPPVCNDCQYYGSFKEAKIEEHLA.

The span at 24 to 37 (LQYHSLSKQQNESP) shows a compositional bias: polar residues. Residues 24–65 (LQYHSLSKQQNESPQPLVGTGKKSPESLVKPDATPLSSPRHV) are disordered. Cysteine 90 and cysteine 95 together coordinate Zn(2+). Position 98 (serine 98) interacts with (6R)-L-erythro-5,6,7,8-tetrahydrobiopterin. Glutamate 132 is an L-arginine binding site. Position 160 (histidine 160) interacts with FAD.

The protein belongs to the NOS family. As to quaternary structure, homodimer. Interacts with NHERF1. Interacts with GAPDH; induced by oxidatively-modified low-densitity lipoprotein (LDL(ox)). Interacts with S100A8 and S100A9 to form the iNOS-S100A8/9 transnitrosylase complex. Interacts with SPSB1, SPSB2 and SPSB4. Interacts with ELOC and CUL5 in the presence of SPSB1 or SPSB2 or SPSB4. Forms a complex with ASL, ASS1 and HSP90AA1; the complex regulates cell-autonomous L-arginine synthesis and citrulline recycling while channeling extracellular L-arginine to nitric oxide synthesis pathway. It depends on heme b as a cofactor. The cofactor is FAD. FMN serves as cofactor. Requires (6R)-L-erythro-5,6,7,8-tetrahydrobiopterin as cofactor. In terms of processing, polyubiquitinated; mediated by SPSB1, SPSB2 and SPSB4, leading to proteasomal degradation.

Its subcellular location is the cytoplasm. The protein resides in the cytosol. The enzyme catalyses 2 L-arginine + 3 NADPH + 4 O2 + H(+) = 2 L-citrulline + 2 nitric oxide + 3 NADP(+) + 4 H2O. With respect to regulation, regulated by calcium/calmodulin. In terms of biological role, produces nitric oxide (NO) which is a messenger molecule with diverse functions throughout the body. In macrophages, NO mediates tumoricidal and bactericidal actions. Also has nitrosylase activity and mediates cysteine S-nitrosylation of cytoplasmic target proteins such PTGS2/COX2. As component of the iNOS-S100A8/9 transnitrosylase complex involved in the selective inflammatory stimulus-dependent S-nitrosylation of GAPDH implicated in regulation of the GAIT complex activity and probably multiple targets including ANXA5, EZR, MSN and VIM. Involved in inflammation, enhances the synthesis of pro-inflammatory mediators such as IL6 and IL8. The protein is Nitric oxide synthase, inducible (NOS2) of Macaca mulatta (Rhesus macaque).